Reading from the N-terminus, the 196-residue chain is Ribosome maturation factor RimP (196 aa).

The span at 131-145 (KKKAGKKSQGKKAGK) shows a compositional bias: basic residues. The disordered stretch occupies residues 131–153 (KKKAGKKSQGKKAGKKTPQAPVQ).

This sequence belongs to the RimP family.

Its subcellular location is the cytoplasm. Required for maturation of 30S ribosomal subunits. This Corynebacterium urealyticum (strain ATCC 43042 / DSM 7109) protein is Ribosome maturation factor RimP.